The sequence spans 318 residues: Basic leucine zipper (bZIP) transcription factor atfB (318 aa).

The segment at F114–Q157 is disordered. Residues R160–K199 are basic motif. The 64-residue stretch at R160–H223 folds into the bZIP domain. The leucine-zipper stretch occupies residues L202–L216. The tract at residues D275–E301 is disordered.

It belongs to the bZIP family. ATF subfamily.

The protein resides in the nucleus. Transcription factor that acts as a key player in the regulatory circuit that integrates secondary metabolism and cellular response to oxidative stress. Regulates the genes involved in development and stress response through direct binding to their promoters. Particularly involved in the resistance to oxidative stress in asexual conidiospores. This is Basic leucine zipper (bZIP) transcription factor atfB from Aspergillus oryzae (strain ATCC 42149 / RIB 40) (Yellow koji mold).